Reading from the N-terminus, the 660-residue chain is MGVIQRLDTHTVNQIAAGEVVERPASIVKELLENALDAGATRIDITLAEGGKKLIRIIDNGCGMAADDAELCVERHATSKIRRAEDLMAVQTLGFRGEALPSIAAVSRLVITTRRSIDNQATRVRIDGGERYPIEAVGAPPGTTVQVEDLFFNTPARRKFLRSATAEGSACAEVIWRLAAAYPHVAFSLTQGKQISFRSPGNNKPLETLSAVFGREIISFLLPLSAVAPDGWTLRGFIGSPSLHRNNRNHQNWFVNQRWVRCRILSQAVEEAYHGMLPGGRFPFFVLHLELPPQTIDVNSHPTKQEIKFDRERDVADFTRQTVLQTLRSRPLSRPLWSLASFQSDGAPPTQQLSSDVREKAEGERWRQDRILLYREGALSPTKQELPKSPERSERVERLNSGDFGQGRALYRESSQELPTDCLRESLEETESQSESIRQCLSENLPLHRQEPRAEKECQPVEGLVAGDVAEWIPIGQFRRSYILAEGGDTLYLVDQHAAHERVLYHGLKERYLNEAGVCASQQLLLPVTVTLTPAEFQGAMEAIAELRDAGLIVEHFGGNTLLIRAVPVGLPPGEEKGFFRDILNSLMKGLRDREVIRRAALSSMACRGAVKAGQVMSHAEMGALLQQLARLEGVDTCPHGRPYLLRIDRRELERRFYRS.

The span at 341–355 (SFQSDGAPPTQQLSS) shows a compositional bias: polar residues. 2 disordered regions span residues 341-362 (SFQSDGAPPTQQLSSDVREKAE) and 378-398 (ALSPTKQELPKSPERSERVER). Basic and acidic residues predominate over residues 385–398 (ELPKSPERSERVER).

It belongs to the DNA mismatch repair MutL/HexB family.

This protein is involved in the repair of mismatches in DNA. It is required for dam-dependent methyl-directed DNA mismatch repair. May act as a 'molecular matchmaker', a protein that promotes the formation of a stable complex between two or more DNA-binding proteins in an ATP-dependent manner without itself being part of a final effector complex. This is DNA mismatch repair protein MutL from Heliobacterium modesticaldum (strain ATCC 51547 / Ice1).